Reading from the N-terminus, the 124-residue chain is UPF0231 protein Shewana3_0655 (124 aa).

This sequence belongs to the UPF0231 family.

The polypeptide is UPF0231 protein Shewana3_0655 (Shewanella sp. (strain ANA-3)).